The following is a 165-amino-acid chain: Dihydrofolate reductase (165 aa).

The region spanning 3 to 165 (VVGLIWAQST…RYRLHSYHRS (163 aa)) is the DHFR domain. 7-9 (IWA) serves as a coordination point for substrate. Residues 8-9 (WA) and 16-21 (IGRDGG) contribute to the NADP(+) site. Substrate is bound at residue Asp-29. 45 to 48 (GRRT) contributes to the NADP(+) binding site. Position 62 (Arg-62) interacts with substrate. Residues 67-70 (LSRQ) and 100-105 (IGGEQI) each bind NADP(+). Thr-119 serves as a coordination point for substrate.

The protein belongs to the dihydrofolate reductase family.

The enzyme catalyses (6S)-5,6,7,8-tetrahydrofolate + NADP(+) = 7,8-dihydrofolate + NADPH + H(+). It functions in the pathway cofactor biosynthesis; tetrahydrofolate biosynthesis; 5,6,7,8-tetrahydrofolate from 7,8-dihydrofolate: step 1/1. Functionally, key enzyme in folate metabolism. Catalyzes an essential reaction for de novo glycine and purine synthesis, and for DNA precursor synthesis. This is Dihydrofolate reductase (folA) from Mycobacterium leprae (strain TN).